Reading from the N-terminus, the 236-residue chain is Phosphoribosylaminoimidazole-succinocarboxamide synthase (236 aa).

Belongs to the SAICAR synthetase family.

It catalyses the reaction 5-amino-1-(5-phospho-D-ribosyl)imidazole-4-carboxylate + L-aspartate + ATP = (2S)-2-[5-amino-1-(5-phospho-beta-D-ribosyl)imidazole-4-carboxamido]succinate + ADP + phosphate + 2 H(+). Its pathway is purine metabolism; IMP biosynthesis via de novo pathway; 5-amino-1-(5-phospho-D-ribosyl)imidazole-4-carboxamide from 5-amino-1-(5-phospho-D-ribosyl)imidazole-4-carboxylate: step 1/2. In Akkermansia muciniphila (strain ATCC BAA-835 / DSM 22959 / JCM 33894 / BCRC 81048 / CCUG 64013 / CIP 107961 / Muc), this protein is Phosphoribosylaminoimidazole-succinocarboxamide synthase.